The following is a 416-amino-acid chain: Gamma-glutamyl phosphate reductase (416 aa).

The protein belongs to the gamma-glutamyl phosphate reductase family.

Its subcellular location is the cytoplasm. The catalysed reaction is L-glutamate 5-semialdehyde + phosphate + NADP(+) = L-glutamyl 5-phosphate + NADPH + H(+). It participates in amino-acid biosynthesis; L-proline biosynthesis; L-glutamate 5-semialdehyde from L-glutamate: step 2/2. Its function is as follows. Catalyzes the NADPH-dependent reduction of L-glutamate 5-phosphate into L-glutamate 5-semialdehyde and phosphate. The product spontaneously undergoes cyclization to form 1-pyrroline-5-carboxylate. The sequence is that of Gamma-glutamyl phosphate reductase from Salmonella schwarzengrund (strain CVM19633).